The following is a 518-amino-acid chain: MAMAMALRKLSSSVNKSSRPLFSASSLYYKSSLPDEAVYDKENPRVTWPKQLNSPLEVIDPEIADIIELEKARQWKGLELIPSENFTSLSVMQAVGSVMTNKYSEGYPGARYYGGNEYIDMAETLCQKRALEAFRLDPAKWGVNVQPLSGSPSNFQVYTALLKPHDRIMALDLPHGGHLSHGYQTDTKKISAVSIFFETMPYRLDESTGYIDYDQLEKSATLFRPKLIVAGASAYARLYDYARIRKVCDKQKAVLLADMAHISGLVAAGVIPSPFDYADVVTTTTHKSLRGPRGAMIFFRKGLKEVNKQGKEVFYDYEDKINQAVFPGLQGGPHNHTITGLAVALKQATTPEYRAYQEQVLSNSSKFAKALSEKGYDLVSGGTENHLVLVNLKNKGIDGSRVEKVLELVHIAANKNTVPGDVSAMVPGGIRMGTPALTSRGFVEEDFVKVAEYFDAAVSLALKVKAESKGTKLKDFVEALQTSSYVQSEISKLKHDVEEFAKQFPTIGFEKATMKYNK.

The transit peptide at 1-31 (MAMAMALRKLSSSVNKSSRPLFSASSLYYKS) directs the protein to the mitochondrion. Lysine 287 bears the N6-(pyridoxal phosphate)lysine mark.

The protein belongs to the SHMT family. Homotetramer. The cofactor is pyridoxal 5'-phosphate.

Its subcellular location is the mitochondrion. The enzyme catalyses (6R)-5,10-methylene-5,6,7,8-tetrahydrofolate + glycine + H2O = (6S)-5,6,7,8-tetrahydrofolate + L-serine. The protein operates within one-carbon metabolism; tetrahydrofolate interconversion. Functionally, catalyzes the interconversion of serine and glycine. The chain is Serine hydroxymethyltransferase, mitochondrial from Pisum sativum (Garden pea).